Consider the following 317-residue polypeptide: ADP-L-glycero-D-manno-heptose-6-epimerase (317 aa).

NADP(+)-binding positions include 10 to 11 (FI), 31 to 32 (DD), K38, K53, 76 to 80 (QGACS), and N93. Y140 functions as the Proton acceptor in the catalytic mechanism. An NADP(+)-binding site is contributed by K144. Position 169 (N169) interacts with substrate. I170 and K178 together coordinate NADP(+). K178 serves as the catalytic Proton acceptor. Substrate is bound by residues A180, H187, 201 to 204 (FEGC), R214, and Y278.

This sequence belongs to the NAD(P)-dependent epimerase/dehydratase family. HldD subfamily. In terms of assembly, homopentamer. NADP(+) is required as a cofactor.

It catalyses the reaction ADP-D-glycero-beta-D-manno-heptose = ADP-L-glycero-beta-D-manno-heptose. It participates in nucleotide-sugar biosynthesis; ADP-L-glycero-beta-D-manno-heptose biosynthesis; ADP-L-glycero-beta-D-manno-heptose from D-glycero-beta-D-manno-heptose 7-phosphate: step 4/4. Its function is as follows. Catalyzes the interconversion between ADP-D-glycero-beta-D-manno-heptose and ADP-L-glycero-beta-D-manno-heptose via an epimerization at carbon 6 of the heptose. The polypeptide is ADP-L-glycero-D-manno-heptose-6-epimerase (Nitrosococcus oceani (strain ATCC 19707 / BCRC 17464 / JCM 30415 / NCIMB 11848 / C-107)).